The chain runs to 211 residues: 7-carboxy-7-deazaguanine synthase (211 aa).

Substrate is bound by residues 22–24 (LQG) and Arg-37. Positions 28-211 (NTGMPSVFVR…LQTHKLIGIE (184 aa)) constitute a Radical SAM core domain. Positions 41, 45, and 48 each coordinate [4Fe-4S] cluster. A Mg(2+)-binding site is contributed by Thr-50. Thr-78 contacts substrate. Residues Gly-80 and 122–124 (SPK) contribute to the S-adenosyl-L-methionine site.

The protein belongs to the radical SAM superfamily. 7-carboxy-7-deazaguanine synthase family. In terms of assembly, homodimer. It depends on [4Fe-4S] cluster as a cofactor. S-adenosyl-L-methionine is required as a cofactor. Mg(2+) serves as cofactor.

It carries out the reaction 6-carboxy-5,6,7,8-tetrahydropterin + H(+) = 7-carboxy-7-deazaguanine + NH4(+). Its pathway is purine metabolism; 7-cyano-7-deazaguanine biosynthesis. Functionally, catalyzes the complex heterocyclic radical-mediated conversion of 6-carboxy-5,6,7,8-tetrahydropterin (CPH4) to 7-carboxy-7-deazaguanine (CDG), a step common to the biosynthetic pathways of all 7-deazapurine-containing compounds. This chain is 7-carboxy-7-deazaguanine synthase, found in Haemophilus influenzae (strain ATCC 51907 / DSM 11121 / KW20 / Rd).